Here is a 240-residue protein sequence, read N- to C-terminus: MQIIQTKQQYICYNPELLTETPEMAFSSEFWQQQNKIIGSAQGRGTTWFVQGEKLAMALRHYRRGGLFGKLVADSYLFSGWDKTRSVAEFSLLNHLIAHQVNVPKPVAARAVRLGWFRYQADILVEKIANSRDLVGILGQETLSQQVWFDVGAMIKRMHDAGVCHTDLNCHNIILDDHKTVWIIDFDKCYRLEGANWQEKNLARLHRSFIKEQGKRGILFNEDNWQWLCKVIRVNGNKGQ.

Asp-167 is a catalytic residue.

The protein belongs to the protein kinase superfamily. KdkA/RfaP family.

The protein localises to the cell inner membrane. It carries out the reaction an alpha-Kdo-(2-&gt;6)-lipid IVA + ATP = a 4-O-phospho-alpha-Kdo-(2-&gt;6)-lipid IVA + ADP + H(+). The protein operates within bacterial outer membrane biogenesis; LPS core biosynthesis. Catalyzes the ATP-dependent phosphorylation of the 3-deoxy-D-manno-octulosonic acid (Kdo) residue in Kdo-lipid IV(A) at the 4-OH position. The polypeptide is 3-deoxy-D-manno-octulosonic acid kinase (kdkA) (Photobacterium damsela subsp. piscicida (Pasteurella piscicida)).